The following is a 583-amino-acid chain: MLO-like protein 6 (583 aa).

Residues 1-15 are Extracellular-facing; the sequence is MADQVKEKTLEETST. The chain crosses the membrane as a helical span at residues 16 to 36; that stretch reads WAVAVVCFVLLLISIVIEKLI. At 37–61 the chain is on the cytoplasmic side; that stretch reads HKIGSWFKKKNKKALYEALEKVKAE. A helical membrane pass occupies residues 62 to 82; that stretch reads LMLMGFISLLLTIGQGYISNI. Topologically, residues 83-161 are extracellular; sequence CIPKNIAASM…VSAYGMHQLH (79 aa). A helical membrane pass occupies residues 162–182; sequence IFIFVLAVCHVIYCIVTYALG. Topologically, residues 183–284 are cytoplasmic; it reads KTKMRRWKKW…KYIQRSLEED (102 aa). The helical transmembrane segment at 285–305 threads the bilayer; sequence FKTIVEINPVIWFIAVLFLLT. At 306 to 314 the chain is on the extracellular side; sequence NTNGLNSYL. A helical membrane pass occupies residues 315-335; it reads WLPFIPFIVILIVGTKLQVII. The Cytoplasmic portion of the chain corresponds to 336–368; the sequence is TKLGLRIQEKGDVVKGTPLVQPGDHFFWFGRPR. Residues 369 to 389 traverse the membrane as a helical segment; that stretch reads FILFLIHLVLFTNAFQLAFFV. At 390-411 the chain is on the extracellular side; sequence WSTYEFGLKNCFHESRVDVIIR. The chain crosses the membrane as a helical span at residues 412–432; that stretch reads ISIGLLVQILCSYVTLPLYAL. The Cytoplasmic segment spans residues 433–583; it reads VTQMGSKMKP…ISLRDFSFKR (151 aa). The tract at residues 447 to 468 is calmodulin-binding; that stretch reads ERVATALKSWHHTAKKNIKHGR. Residues 461–583 are disordered; sequence KKNIKHGRTS…ISLRDFSFKR (123 aa). Low complexity predominate over residues 470-484; the sequence is SESTTPFSSRPTTPT. Over residues 541 to 551 the composition is skewed to basic and acidic residues; the sequence is RFGEEESEKKF.

The protein belongs to the MLO family.

It localises to the membrane. Functionally, may be involved in modulation of pathogen defense and leaf cell death. Activity seems to be regulated by Ca(2+)-dependent calmodulin binding and seems not to require heterotrimeric G proteins. The sequence is that of MLO-like protein 6 (MLO6) from Arabidopsis thaliana (Mouse-ear cress).